The following is a 186-amino-acid chain: Cell division protein ZapC (186 aa).

It belongs to the ZapC family. As to quaternary structure, interacts directly with FtsZ.

Its subcellular location is the cytoplasm. Contributes to the efficiency of the cell division process by stabilizing the polymeric form of the cell division protein FtsZ. Acts by promoting interactions between FtsZ protofilaments and suppressing the GTPase activity of FtsZ. In Musicola paradisiaca (strain Ech703) (Dickeya paradisiaca), this protein is Cell division protein ZapC.